The following is a 384-amino-acid chain: MDQDAFILKEDSEVEREAPGGRESLSDVIGFLDAVLSSEPTDIGGDRSWLHNTINTPQGPGSAHRAKSEGEGEVSTPSTQDNRSGEESRVSGRTSKPEAEAHAGNLDKQNIHRAFGGRTGTNSVSQDLGDGGDSGILENPPNERGYPRSGIEDENREMAAHPDKRGEDQAEGLPEEVRGSTSLPDEGEGGASNNGRSMEPGSSHSARVTGVLVIPSPELEEAVLRRNKRRPTNSGSKPLTPATVPGTRSPPLNRYNSTGSPPGKPPSTQDEHINSGDTPAVRVKDRKPPIGTRSVSDCPANGRSIHPGLETDSTKKGHRREHIIYERDGYIVDESWCNPVCSRIRIIPRRELCVCKTCPKVCKLCRDDIQCMRPDPFCREIFRS.

Disordered regions lie at residues 1–23 (MDQD…GGRE) and 38–317 (SEPT…TKKG). Positions 7 to 20 (ILKEDSEVEREAPG) are enriched in basic and acidic residues. Positions 50–59 (LHNTINTPQG) are enriched in polar residues. Position 68 is a phosphoserine; by host (serine 68). The segment covering 83–101 (RSGEESRVSGRTSKPEAEA) has biased composition (basic and acidic residues). Serine 125 is subject to Phosphoserine; by host. Residues 150-168 (GIEDENREMAAHPDKRGED) are compositionally biased toward basic and acidic residues. A compositionally biased stretch (polar residues) spans 191–206 (ASNNGRSMEPGSSHSA). Serine 192, serine 249, serine 257, and serine 260 each carry phosphoserine; by host. Zn(2+)-binding residues include histidine 318, cysteine 337, cysteine 341, cysteine 353, cysteine 355, cysteine 358, cysteine 362, and cysteine 365.

Belongs to the paramyxoviruses V protein family. Interacts with host IFIH1/MDA5 and DHX58/LGP2. Interacts with host IRF3. Interacts with host RIGI regulatory protein (via CARDs domain) and host TRIM25 (via SPRY domain); these interactions prevent TRIM25-mediated ubiquitination of RIG-I and disrupts downstream RIG-I signaling.

The protein resides in the host cytoplasm. Functionally, plays an essential role in the inhibition of host immune response. Prevents the establishment of cellular antiviral state by blocking interferon-alpha/beta (IFN-alpha/beta) production and signaling pathway. Interacts with host IFIH1/MDA5 and DHX58/LGP2 to inhibit the transduction pathway involved in the activation of IFN-beta promoter, thus protecting the virus against cell antiviral state. Also interacts with and inhibits host IRF3. Blocks the type I interferon signaling pathway by disrupting the RIG-I signaling pathway. The chain is Protein V (P/V/C) from Sendai virus (strain Z) (SeV).